We begin with the raw amino-acid sequence, 420 residues long: MSGRPRTTSFAESCKPVQQPSAFGSMKVSRDKDGSKVTTVVATPGQGPDRPQEVSYTDTKVIGNGSFGVVYQAKLCDSGELVAIKKVLQDKRFKNRELQIMRKLDHCNIVRLRYFFYSSGEKKDVVYLNLVLDYVPETVYRVARHYSRAKQTLPVIYVKLYMYQLFRSLAYIHSFGICHRDIKPQNLLLDPDTAVLKLCDFGSAKQLVRGEPNVSYICSRYYRAPELIFGATDYTSSIDVWSAGCVLAELLLGQPIFPGDSGVDQLVEIIKVLGTPTREQIREMNPNYTEFKFPQIKAHPWTKVFRPRTPPEAIALCSRLLEYTPTARLTPLEACAHSFFDELRDPNVKLPNGRDTPALFNFTTQELSSNPPLATILIPPHARIQAAASTPTNATAASDANAGDRGQTNNAAFASASNST.

Over residues 1-22 (MSGRPRTTSFAESCKPVQQPSA) the composition is skewed to polar residues. Residues 1–35 (MSGRPRTTSFAESCKPVQQPSAFGSMKVSRDKDGS) are disordered. The residue at position 9 (S9) is a Phosphoserine; by PKB/AKT1, RPS6KA3 and SGK3. A lipid anchor (S-palmitoyl cysteine) is attached at C14. One can recognise a Protein kinase domain in the interval 56-340 (YTDTKVIGNG…PLEACAHSFF (285 aa)). Residues 62–70 (IGNGSFGVV) and K85 each bind ATP. The Proton acceptor role is filled by D181. Phosphotyrosine is present on Y216. Low complexity-rich tracts occupy residues 387–401 (AAST…SDAN) and 409–420 (NNAAFASASNST). The tract at residues 387–420 (AASTPTNATAASDANAGDRGQTNNAAFASASNST) is disordered. A Phosphoserine modification is found at S389. At T390 the chain carries Phosphothreonine.

The protein belongs to the protein kinase superfamily. CMGC Ser/Thr protein kinase family. GSK-3 subfamily. In terms of assembly, monomer. Interacts with DAB2IP (via C2 domain); the interaction stimulates GSK3B kinase activation. Interacts (via C2 domain) with PPP2CA. Interacts with ARRB2, AXIN1, CABYR, DISC1, MMP2, MUC1, NIN, PRUNE1 and ZBED3. Interacts with AXIN1; the interaction mediates hyperphosphorylation of CTNNB1 leading to its ubiquitination and destruction. Interacts with and phosphorylates SNAI1. Interacts with DNM1L (via a C-terminal domain). Found in a complex composed of MACF1, APC, AXIN1, CTNNB1 and GSK3B. Interacts with SGK3. Interacts with the CLOCK-BMAL1 heterodimer. Interacts with the BMAL1. Interacts with CTNND2. The complex composed, at least, of APC, CTNNB1 and GSK3B interacts with JPT1; the interaction requires the inactive form of GSK3B (phosphorylated at 'Ser-9'). Forms a complex composed of PRKAR2A or PRKAR2B, GSK3B and GSKIP through GSKIP interaction; facilitates PKA-induced phosphorylation and regulates GSK3B activity. Interacts with GSKIP. Interacts with GID8. Interacts with PIWIL2. Interacts with LMBR1L. Interacts with DDX3X. Interacts with BIRC2. Interacts with TNFRSF10B; TNFRSF10B stimulation inhibits GSK3B kinase activity. Found in a complex with SLC39A6, SLC39A10 and with GSK3B that controls NCAM1 phosphorylation. Interacts with PKP3 (via ARM repeats); the interaction may be involved in PKP3 protein degradation. Phosphorylated by AKT1 and ILK1. Upon insulin-mediated signaling, the activated PKB/AKT1 and RPS6KA3 protein kinases phosphorylate and deactivate GSK3B, resulting in the dephosphorylation and activation of GYS1. Activated by phosphorylation at Tyr-216. Inactivated by phosphorylation at Ser-9. Post-translationally, mono-ADP-ribosylation by PARP10 negatively regulates kinase activity. In terms of processing, palmitoylated. Palmitoylation by ZDHHC4 prevents AKT1-mediated phosphorylation.

Its subcellular location is the cytoplasm. The protein localises to the nucleus. The protein resides in the cell membrane. The catalysed reaction is L-seryl-[tau protein] + ATP = O-phospho-L-seryl-[tau protein] + ADP + H(+). It carries out the reaction L-threonyl-[tau protein] + ATP = O-phospho-L-threonyl-[tau protein] + ADP + H(+). It catalyses the reaction L-seryl-[protein] + ATP = O-phospho-L-seryl-[protein] + ADP + H(+). The enzyme catalyses L-threonyl-[protein] + ATP = O-phospho-L-threonyl-[protein] + ADP + H(+). Its activity is regulated as follows. Activated by phosphorylation at Tyr-216. In response to insulin, inhibited by phosphorylation at Ser-9 by PKB/AKT1; phosphorylation at this site causes a conformational change, preventing access of substrates to the active site. Inhibited by IL22 treatment which also triggers phosphorylation at Ser-9, promoting inactivation. Inhibited by lithium. Constitutively active protein kinase that acts as a negative regulator in the hormonal control of glucose homeostasis, Wnt signaling and regulation of transcription factors and microtubules, by phosphorylating and inactivating glycogen synthase (GYS1 or GYS2), EIF2B, CTNNB1/beta-catenin, APC, AXIN1, DPYSL2/CRMP2, JUN, NFATC1/NFATC, MAPT/TAU and MACF1. Requires primed phosphorylation of the majority of its substrates. In skeletal muscle, contributes to insulin regulation of glycogen synthesis by phosphorylating and inhibiting GYS1 activity and hence glycogen synthesis. May also mediate the development of insulin resistance by regulating activation of transcription factors. Regulates protein synthesis by controlling the activity of initiation factor 2B (EIF2BE/EIF2B5) in the same manner as glycogen synthase. In Wnt signaling, GSK3B forms a multimeric complex with APC, AXIN1 and CTNNB1/beta-catenin and phosphorylates the N-terminus of CTNNB1 leading to its degradation mediated by ubiquitin/proteasomes. Phosphorylates JUN at sites proximal to its DNA-binding domain, thereby reducing its affinity for DNA. Phosphorylates NFATC1/NFATC on conserved serine residues promoting NFATC1/NFATC nuclear export, shutting off NFATC1/NFATC gene regulation, and thereby opposing the action of calcineurin. Phosphorylates MAPT/TAU on 'Thr-548', decreasing significantly MAPT/TAU ability to bind and stabilize microtubules. MAPT/TAU is the principal component of neurofibrillary tangles in Alzheimer disease. Plays an important role in ERBB2-dependent stabilization of microtubules at the cell cortex. Phosphorylates MACF1, inhibiting its binding to microtubules which is critical for its role in bulge stem cell migration and skin wound repair. Probably regulates NF-kappa-B (NFKB1) at the transcriptional level and is required for the NF-kappa-B-mediated anti-apoptotic response to TNF-alpha (TNF/TNFA). Negatively regulates replication in pancreatic beta-cells, resulting in apoptosis, loss of beta-cells and diabetes. Through phosphorylation of the anti-apoptotic protein MCL1, may control cell apoptosis in response to growth factors deprivation. Phosphorylates MUC1 in breast cancer cells, decreasing the interaction of MUC1 with CTNNB1/beta-catenin. Is necessary for the establishment of neuronal polarity and axon outgrowth. Phosphorylates MARK2, leading to inhibition of its activity. Phosphorylates SIK1 at 'Thr-182', leading to sustainment of its activity. Phosphorylates ZC3HAV1 which enhances its antiviral activity. Phosphorylates SNAI1, leading to its ubiquitination and proteasomal degradation. Phosphorylates SFPQ at 'Thr-687' upon T-cell activation. Phosphorylates NR1D1 st 'Ser-55' and 'Ser-59' and stabilizes it by protecting it from proteasomal degradation. Regulates the circadian clock via phosphorylation of the major clock components including BMAL1, CLOCK and PER2. Phosphorylates CLOCK AT 'Ser-427' and targets it for proteasomal degradation. Phosphorylates BMAL1 at 'Ser-17' and 'Ser-21' and primes it for ubiquitination and proteasomal degradation. Phosphorylates FBXL2 at 'Thr-404' and primes it for ubiquitination by the SCF(FBXO3) complex and proteasomal degradation. Phosphorylates OGT at 'Ser-3' or 'Ser-4' which positively regulates its activity. Phosphorylates MYCN in neuroblastoma cells which may promote its degradation. Regulates the circadian rhythmicity of hippocampal long-term potentiation and BMAL1 and PER2 expression. Acts as a regulator of autophagy by mediating phosphorylation of KAT5/TIP60 under starvation conditions, activating KAT5/TIP60 acetyltransferase activity and promoting acetylation of key autophagy regulators, such as ULK1 and RUBCNL/Pacer. Negatively regulates extrinsic apoptotic signaling pathway via death domain receptors. Promotes the formation of an anti-apoptotic complex, made of DDX3X, BRIC2 and GSK3B, at death receptors, including TNFRSF10B. The anti-apoptotic function is most effective with weak apoptotic signals and can be overcome by stronger stimulation. Phosphorylates E2F1, promoting the interaction between E2F1 and USP11, stabilizing E2F1 and promoting its activity. Phosphorylates mTORC2 complex component RICTOR at 'Ser-1235' in response to endoplasmic stress, inhibiting mTORC2. Phosphorylates FXR1, promoting FXR1 ubiquitination by the SCF(FBXO4) complex and FXR1 degradation by the proteasome. Phosphorylates interleukin-22 receptor subunit IL22RA1, preventing its proteasomal degradation. The chain is Glycogen synthase kinase-3 beta from Spermophilus citellus (European ground squirrel).